The following is a 395-amino-acid chain: uncharacterized protein (395 aa).

The interval 115–144 (TKPPTEGGPEKDQSSPSQTQAAPQGPSTAS) is disordered. Over residues 128–141 (SSPSQTQAAPQGPS) the composition is skewed to low complexity.

This is an uncharacterized protein from Homo sapiens (Human).